A 492-amino-acid chain; its full sequence is Cytochrome P450 26A1 (492 aa).

Cys-437 is a heme binding site.

The protein belongs to the cytochrome P450 family. It depends on heme as a cofactor.

The protein resides in the endoplasmic reticulum membrane. It localises to the microsome membrane. It catalyses the reaction all-trans-retinoate + reduced [NADPH--hemoprotein reductase] + O2 = all-trans-(4S)-hydroxyretinoate + oxidized [NADPH--hemoprotein reductase] + H2O + H(+). The catalysed reaction is all-trans-(4S)-hydroxyretinoate + reduced [NADPH--hemoprotein reductase] + O2 = all-trans-(4S,16)-dihydroxyretinoate + oxidized [NADPH--hemoprotein reductase] + H2O + H(+). It carries out the reaction all-trans-retinoate + reduced [NADPH--hemoprotein reductase] + O2 = all-trans-18-hydroxyretinoate + oxidized [NADPH--hemoprotein reductase] + H2O + H(+). A cytochrome P450 monooxygenase involved in the metabolism of retinoates (RAs), the active metabolites of vitamin A, and critical signaling molecules in animals. RAs exist as at least four different isomers: all-trans-RA (atRA), 9-cis-RA, 13-cis-RA, and 9,13-dicis-RA, where atRA is considered to be the biologically active isomer, although 9-cis-RA and 13-cis-RA also have activity. Catalyzes the hydroxylation of atRA primarily at C-4 and C-18, thereby contributing to the regulation of atRA homeostasis and signaling. Hydroxylation of atRA limits its biological activity and initiates a degradative process leading to its eventual elimination. Involved in the convertion of atRA to all-trans-4-oxo-RA. Able to metabolize other RAs such as 9-cis, 13-cis and 9,13-di-cis RA. Can oxidize all-trans-13,14-dihydroretinoate (DRA) to metabolites which could include all-trans-4-oxo-DRA, all-trans-4-hydroxy-DRA, all-trans-5,8-epoxy-DRA, and all-trans-18-hydroxy-DRA. May play a role in the oxidative metabolism of xenobiotics such as tazarotenic acid. This Gallus gallus (Chicken) protein is Cytochrome P450 26A1 (CYP26A1).